The following is a 304-amino-acid chain: Homoserine kinase (304 aa).

An ATP-binding site is contributed by 90–100; that stretch reads PLARGLGSSAS.

This sequence belongs to the GHMP kinase family. Homoserine kinase subfamily.

The protein localises to the cytoplasm. The catalysed reaction is L-homoserine + ATP = O-phospho-L-homoserine + ADP + H(+). It participates in amino-acid biosynthesis; L-threonine biosynthesis; L-threonine from L-aspartate: step 4/5. Functionally, catalyzes the ATP-dependent phosphorylation of L-homoserine to L-homoserine phosphate. This chain is Homoserine kinase, found in Staphylococcus aureus (strain NCTC 8325 / PS 47).